A 593-amino-acid polypeptide reads, in one-letter code: Protein PSP2 (593 aa).

Residues 56–65 are compositionally biased toward basic and acidic residues; sequence AGEHQRDGHQ. Positions 56-101 are disordered; sequence AGEHQRDGHQQHPHGGHGPMNRSRFSNAGPFGGGSMGDFANHHHPL. A phosphoserine mark is found at Ser150 and Ser238. Disordered stretches follow at residues 227–248 and 280–593; these read KPFITKTQRSKSNPFGSAKPVD and DSMA…DMPL. 2 stretches are compositionally biased toward polar residues: residues 231–241 and 280–290; these read TKTQRSKSNPF and DSMATTATGSK. Ser340 is subject to Phosphoserine. Positions 347-402 are enriched in basic and acidic residues; that stretch reads SKPDKSDEFKGGDEQGFEKGGDDKAQLDVSNDKDKGSETDVDKQFTFKNVEREHSM. A compositionally biased stretch (low complexity) spans 408 to 426; sequence NGNHNNNNGNFRGSNRYRG. Arg419, Arg425, and Arg440 each carry omega-N-methylarginine. Arg443 carries the dimethylated arginine modification. Arg447 bears the Omega-N-methylarginine mark. The segment covering 449-477 has biased composition (low complexity); that stretch reads GSSYNNNNNNTNDNNNNNNNSSSNNNNGS. Polar residues-rich tracts occupy residues 486 to 497 and 505 to 516; these read EEGLTSDSSLDA and FTNSTSNTQQYS. Residue Ser522 is modified to Phosphoserine. The span at 534-545 shows a compositional bias: low complexity; the sequence is RNNGRGNYNSSG. Arg538, Arg551, and Arg575 each carry omega-N-methylarginine. Residues 546–563 show a composition bias toward gly residues; that stretch reads MNGGSRGRGFGRGRGFGR. Positions 578 to 587 are enriched in low complexity; sequence SGNYSNYNNR.

Its subcellular location is the cytoplasm. It localises to the P-body. The protein localises to the stress granule. Functionally, DNA polymerase alpha mutation suppressor. Suppressor of group II intron splicing defects of a mutation in MRS2. May play a role in mitochondrial mRNA splicing. This chain is Protein PSP2, found in Saccharomyces cerevisiae (strain ATCC 204508 / S288c) (Baker's yeast).